Consider the following 175-residue polypeptide: Shikimate kinase (175 aa).

12 to 19 (GGRASGKS) contributes to the ATP binding site.

It belongs to the shikimate kinase family.

It is found in the cytoplasm. It carries out the reaction shikimate + ATP = 3-phosphoshikimate + ADP + H(+). The protein operates within metabolic intermediate biosynthesis; chorismate biosynthesis; chorismate from D-erythrose 4-phosphate and phosphoenolpyruvate: step 5/7. The chain is Shikimate kinase from Nitratidesulfovibrio vulgaris (strain ATCC 29579 / DSM 644 / CCUG 34227 / NCIMB 8303 / VKM B-1760 / Hildenborough) (Desulfovibrio vulgaris).